The sequence spans 326 residues: Myeloid protein 1 (326 aa).

An N-terminal signal peptide occupies residues 1–18; that stretch reads MPALSLIALLSLVSTAFA. A run of 2 repeats spans residues 28 to 162 and 177 to 312. Cystine bridges form between cysteine 37–cysteine 74, cysteine 48–cysteine 53, and cysteine 113–cysteine 156. The Zn(2+) site is built by histidine 67, aspartate 71, and histidine 152. The disordered stretch occupies residues 307–326; the sequence is DRSDPTSNLERGKGESEMEV.

The protein belongs to the LECT2/MIM-1 family. Substrate for arginine-specific ADP-ribosyltransferase.

The protein resides in the cytoplasmic granule. The sequence is that of Myeloid protein 1 (MIM1) from Gallus gallus (Chicken).